A 57-amino-acid polypeptide reads, in one-letter code: Small ribosomal subunit protein bS21 (57 aa).

It belongs to the bacterial ribosomal protein bS21 family.

This is Small ribosomal subunit protein bS21 from Lysinibacillus sphaericus (strain C3-41).